A 138-amino-acid polypeptide reads, in one-letter code: Cysteine desulfuration protein SufE (138 aa).

C51 serves as the catalytic Cysteine persulfide intermediate.

It belongs to the SufE family. As to quaternary structure, homodimer. Interacts with SufS.

The protein localises to the cytoplasm. It functions in the pathway cofactor biosynthesis; iron-sulfur cluster biosynthesis. Its function is as follows. Participates in cysteine desulfuration mediated by SufS. Cysteine desulfuration mobilizes sulfur from L-cysteine to yield L-alanine and constitutes an essential step in sulfur metabolism for biosynthesis of a variety of sulfur-containing biomolecules. Functions as a sulfur acceptor for SufS, by mediating the direct transfer of the sulfur atom from the S-sulfanylcysteine of SufS, an intermediate product of cysteine desulfuration process. The protein is Cysteine desulfuration protein SufE of Salmonella choleraesuis (strain SC-B67).